The chain runs to 218 residues: Ras-related protein Rab-4A (218 aa).

9 residues coordinate GTP: Gly-23, Thr-24, Gly-25, Lys-26, Ser-27, Cys-28, Ser-42, His-44, and Thr-45. Residue Ser-27 participates in Mg(2+) binding. A Switch 1 motif is present at residues 44-49 (HTIGVE). Residues Thr-45 and Asp-68 each contribute to the Mg(2+) site. A Switch 2 motif is present at residues 70-79 (AGQERFRSVT). Residue Gly-71 coordinates GTP. Residue Gln-72 is modified to 5-glutamyl serotonin. Positions 126, 127, 129, 157, and 158 each coordinate GTP. Ser-190 bears the Phosphoserine mark. Ser-204 carries the phosphoserine; by CDK1 modification. 2 S-geranylgeranyl cysteine lipidation sites follow: Cys-216 and Cys-218. Cys-218 is subject to Cysteine methyl ester.

This sequence belongs to the small GTPase superfamily. Rab family. Interacts with SGSM1, SGSM2 and SGSM3. Interacts with RAB11FIP1, RABEP1, ZFYVE20 and RUFY1. Interacts (membrane-bound form) with NDRG1; the interaction involves NDRG1 in vesicular recycling of E-cadherin. Interacts (in GTP-bound form) with GRIPAP1 (via N-terminus). Interacts with RABEP1 and RBSN. Does not interact with HPS4. Interacts with RABEP2; this interaction may mediate VEGFR2 cell surface expression. The cofactor is Mg(2+). Serotonylation of Gln-72 by TGM2 during activation and aggregation of platelets leads to constitutive activation of GTPase activity. In terms of processing, phosphorylated by CDK1 kinase during mitosis.

It is found in the membrane. It localises to the cytoplasm. The protein resides in the early endosome membrane. Its subcellular location is the recycling endosome membrane. The enzyme catalyses GTP + H2O = GDP + phosphate + H(+). Regulated by guanine nucleotide exchange factors (GEFs) which promote the exchange of bound GDP for free GTP. Regulated by GTPase activating proteins (GAPs) which increase the GTP hydrolysis activity. Inhibited by GDP dissociation inhibitors (GDIs). Functionally, the small GTPases Rab are key regulators of intracellular membrane trafficking, from the formation of transport vesicles to their fusion with membranes. Rabs cycle between an inactive GDP-bound form and an active GTP-bound form that is able to recruit to membranes different sets of downstream effectors directly responsible for vesicle formation, movement, tethering and fusion. RAB4A is involved in protein transport. Also plays a role in vesicular traffic. Mediates VEGFR2 endosomal trafficking to enhance VEGFR2 signaling. Acts as a regulator of platelet alpha-granule release during activation and aggregation of platelets. This chain is Ras-related protein Rab-4A, found in Rattus norvegicus (Rat).